The chain runs to 473 residues: 3-isopropylmalate dehydratase large subunit 2 (473 aa).

[4Fe-4S] cluster-binding residues include Cys350, Cys410, and Cys413.

It belongs to the aconitase/IPM isomerase family. LeuC type 1 subfamily. Heterodimer of LeuC and LeuD. The cofactor is [4Fe-4S] cluster.

The catalysed reaction is (2R,3S)-3-isopropylmalate = (2S)-2-isopropylmalate. It participates in amino-acid biosynthesis; L-leucine biosynthesis; L-leucine from 3-methyl-2-oxobutanoate: step 2/4. Functionally, catalyzes the isomerization between 2-isopropylmalate and 3-isopropylmalate, via the formation of 2-isopropylmaleate. This Salmonella typhimurium (strain LT2 / SGSC1412 / ATCC 700720) protein is 3-isopropylmalate dehydratase large subunit 2.